Consider the following 316-residue polypeptide: Transaldolase 2 (316 aa).

Residue K131 is the Schiff-base intermediate with substrate of the active site.

It belongs to the transaldolase family. Type 1 subfamily. Homodimer.

It localises to the cytoplasm. It carries out the reaction D-sedoheptulose 7-phosphate + D-glyceraldehyde 3-phosphate = D-erythrose 4-phosphate + beta-D-fructose 6-phosphate. It functions in the pathway carbohydrate degradation; pentose phosphate pathway; D-glyceraldehyde 3-phosphate and beta-D-fructose 6-phosphate from D-ribose 5-phosphate and D-xylulose 5-phosphate (non-oxidative stage): step 2/3. Transaldolase is important for the balance of metabolites in the pentose-phosphate pathway. The sequence is that of Transaldolase 2 from Salmonella choleraesuis (strain SC-B67).